A 790-amino-acid polypeptide reads, in one-letter code: Phenylalanine--tRNA ligase beta subunit (790 aa).

Residues 39–154 form the tRNA-binding domain; that stretch reads PDSLNTVVTG…ADTPLGESAC (116 aa). In terms of domain architecture, B5 spans 404-483; the sequence is FSPLSLSVRP…FVQKTQKILP (80 aa). The Mg(2+) site is built by D457, D463, E466, and E467. The FDX-ACB domain occupies 694-790; that stretch reads PIYPASSRDI…KLANIGQGNS (97 aa).

The protein belongs to the phenylalanyl-tRNA synthetase beta subunit family. Type 1 subfamily. As to quaternary structure, tetramer of two alpha and two beta subunits. Mg(2+) serves as cofactor.

Its subcellular location is the cytoplasm. It catalyses the reaction tRNA(Phe) + L-phenylalanine + ATP = L-phenylalanyl-tRNA(Phe) + AMP + diphosphate + H(+). This chain is Phenylalanine--tRNA ligase beta subunit (pheT), found in Chlamydia trachomatis serovar D (strain ATCC VR-885 / DSM 19411 / UW-3/Cx).